Reading from the N-terminus, the 120-residue chain is Large ribosomal subunit protein uL24 (120 aa).

It belongs to the universal ribosomal protein uL24 family. Part of the 50S ribosomal subunit.

One of two assembly initiator proteins, it binds directly to the 5'-end of the 23S rRNA, where it nucleates assembly of the 50S subunit. In terms of biological role, one of the proteins that surrounds the polypeptide exit tunnel on the outside of the subunit. In Pseudarthrobacter chlorophenolicus (strain ATCC 700700 / DSM 12829 / CIP 107037 / JCM 12360 / KCTC 9906 / NCIMB 13794 / A6) (Arthrobacter chlorophenolicus), this protein is Large ribosomal subunit protein uL24.